The following is a 191-amino-acid chain: uncharacterized protein (191 aa).

The HTH tetR-type domain occupies glycine 6–leucine 66. Positions serine 29–isoleucine 48 form a DNA-binding region, H-T-H motif.

This is an uncharacterized protein from Bacillus subtilis (strain 168).